Consider the following 217-residue polypeptide: Large ribosomal subunit protein uL3 (217 aa).

A disordered region spans residues 129–162 (SRGPMSHGSKNHRAPGSTGAGTTPGRIYPGKRMA). Low complexity predominate over residues 142 to 153 (APGSTGAGTTPG).

It belongs to the universal ribosomal protein uL3 family. As to quaternary structure, part of the 50S ribosomal subunit. Forms a cluster with proteins L14 and L19.

One of the primary rRNA binding proteins, it binds directly near the 3'-end of the 23S rRNA, where it nucleates assembly of the 50S subunit. This Prochlorococcus marinus (strain MIT 9215) protein is Large ribosomal subunit protein uL3.